The sequence spans 623 residues: uncharacterized protein (623 aa).

Residues 1 to 18 (MSSRSGSADTFTQRSDSN) show a composition bias toward polar residues. Disordered regions lie at residues 1-107 (MSSR…DPFT), 132-181 (LGSD…EIGA), 207-231 (SWNL…ADTD), 298-349 (REET…ESDQ), 384-464 (RKSV…DRNV), 533-553 (SIND…PPET), and 568-623 (VESR…TKGD). Basic and acidic residues predominate over residues 25–34 (ISLDDVRDNN). A compositionally biased stretch (low complexity) spans 39 to 49 (SSSGISTTGSS). A compositionally biased stretch (polar residues) spans 132-144 (LGSDTARPTSNGG). Residues 165–177 (STSTWGPSGPTTP) are compositionally biased toward low complexity. Residues 328–339 (EKSTFSRISEQP) are compositionally biased toward polar residues. A compositionally biased stretch (low complexity) spans 400–417 (QTPTISTASSPIQPSSSP). The segment covering 533-548 (SINDLQQGTSSSQNQA) has biased composition (polar residues). Low complexity predominate over residues 604 to 614 (PSASPSTSRTR).

This is an uncharacterized protein from Emericella nidulans (strain FGSC A4 / ATCC 38163 / CBS 112.46 / NRRL 194 / M139) (Aspergillus nidulans).